The following is a 78-amino-acid chain: UPF0349 protein RBAM_029300 (78 aa).

This sequence belongs to the UPF0349 family.

This chain is UPF0349 protein RBAM_029300, found in Bacillus velezensis (strain DSM 23117 / BGSC 10A6 / LMG 26770 / FZB42) (Bacillus amyloliquefaciens subsp. plantarum).